Reading from the N-terminus, the 267-residue chain is Phosphoethanolamine/phosphocholine phosphatase (267 aa).

D32 serves as the catalytic Nucleophile. Residues D32 and D34 each contribute to the Mg(2+) site. D34 functions as the Proton donor in the catalytic mechanism. D43 and D123 together coordinate substrate. Position 203 (D203) interacts with Mg(2+).

This sequence belongs to the HAD-like hydrolase superfamily. PHOSPHO family. It depends on Mg(2+) as a cofactor. In terms of tissue distribution, expressed at sites of mineralization in bone and cartilage. Highly expressed in osteoblast cell line SaOS-2 which produces a mineralized matrix, but not in MG-63 cell line, which do not mineralize.

The protein resides in the extracellular vesicle. It catalyses the reaction phosphoethanolamine + H2O = ethanolamine + phosphate. The enzyme catalyses phosphocholine + H2O = choline + phosphate. Its function is as follows. Phosphatase that has a high activity toward phosphoethanolamine (PEA) and phosphocholine (PCho). Involved in the generation of inorganic phosphate for bone mineralization. Acts in a non-redundant manner with PHOSPHO1 in skeletal mineralization: while PHOSPHO1 mediates the initiation of hydroxyapatite crystallization in the matrix vesicles (MVs), ALPL/TNAP catalyzes the spread of hydroxyapatite crystallization in the extracellular matrix. This is Phosphoethanolamine/phosphocholine phosphatase from Homo sapiens (Human).